Reading from the N-terminus, the 378-residue chain is MAANRDYYDVLGVSRDASDAEISKAYRKLAKKYHPDLNHEAGAEEKYKEVNEAYEVLHDPQKRQQYDQFGQAGMNGQGGFGGQYGGQGFGGADFGDFGDIFSSFFGGARQQVDPTAPQRGADLDYTMTIDFMDAIKGKTSEISYSRSTTCEVCKGSGAEKGTHPITCDKCGGSGMMTITQRSVLGMIQRQTTCDKCTGSGVIIQHPCHNCHGKGVKTQKQTLQVKVPAGIDNGQQIRLAGQGEAGKNGGPYGDLYIVFRVRPSKDFTRRGQTIYTTVPISFAQATLGDEINVKTVYGDTKLKIPAGTQPNQKFTLKEKGVPSLRGGSTGDQVTTVEIVIPKSINEAQRKALLEFVKASGGSIAPQEKGFFERLKEKLS.

A J domain is found at 6–70 (DYYDVLGVSR…QKRQQYDQFG (65 aa)). A CR-type zinc finger spans residues 137 to 219 (GKTSEISYSR…CHGKGVKTQK (83 aa)). Residues cysteine 150, cysteine 153, cysteine 167, cysteine 170, cysteine 193, cysteine 196, cysteine 207, and cysteine 210 each coordinate Zn(2+). CXXCXGXG motif repeat units lie at residues 150 to 157 (CEVCKGSG), 167 to 174 (CDKCGGSG), 193 to 200 (CDKCTGSG), and 207 to 214 (CHNCHGKG).

It belongs to the DnaJ family. As to quaternary structure, homodimer. Requires Zn(2+) as cofactor.

The protein resides in the cytoplasm. Participates actively in the response to hyperosmotic and heat shock by preventing the aggregation of stress-denatured proteins and by disaggregating proteins, also in an autonomous, DnaK-independent fashion. Unfolded proteins bind initially to DnaJ; upon interaction with the DnaJ-bound protein, DnaK hydrolyzes its bound ATP, resulting in the formation of a stable complex. GrpE releases ADP from DnaK; ATP binding to DnaK triggers the release of the substrate protein, thus completing the reaction cycle. Several rounds of ATP-dependent interactions between DnaJ, DnaK and GrpE are required for fully efficient folding. Also involved, together with DnaK and GrpE, in the DNA replication of plasmids through activation of initiation proteins. The polypeptide is Chaperone protein DnaJ (Lactobacillus delbrueckii subsp. bulgaricus (strain ATCC 11842 / DSM 20081 / BCRC 10696 / JCM 1002 / NBRC 13953 / NCIMB 11778 / NCTC 12712 / WDCM 00102 / Lb 14)).